The following is a 177-amino-acid chain: ATP-dependent protease subunit HslV (177 aa).

The active site involves T6. Na(+)-binding residues include S161, C164, and T167.

It belongs to the peptidase T1B family. HslV subfamily. A double ring-shaped homohexamer of HslV is capped on each side by a ring-shaped HslU homohexamer. The assembly of the HslU/HslV complex is dependent on binding of ATP.

It localises to the cytoplasm. It catalyses the reaction ATP-dependent cleavage of peptide bonds with broad specificity.. Its activity is regulated as follows. Allosterically activated by HslU binding. Its function is as follows. Protease subunit of a proteasome-like degradation complex believed to be a general protein degrading machinery. The protein is ATP-dependent protease subunit HslV of Thermodesulfovibrio yellowstonii (strain ATCC 51303 / DSM 11347 / YP87).